The primary structure comprises 429 residues: Integral membrane protein GPR137C (429 aa).

Positions 1 to 17 (MRVSVPGPAAAAAPAAG) are enriched in low complexity. Residues 1-29 (MRVSVPGPAAAAAPAAGREPSTPGGGSGG) are disordered. Topologically, residues 1-48 (MRVSVPGPAAAAAPAAGREPSTPGGGSGGGGAVAAASGAAVPGSVQLA) are lumenal. Residues 49-69 (LSVLHALLYAALFAFAYLQLW) form a helical membrane-spanning segment. Over 70–83 (RLLLYRERRLSYQS) the chain is Cytoplasmic. A helical membrane pass occupies residues 84–104 (LCLFLCLLWAALRTTLFSAAF). Over 105–120 (SLSGSLPLLRPPAHLH) the chain is Lumenal. Residues 121–141 (FFPHWLLYCFPSCLQFSTLCL) traverse the membrane as a helical segment. Residues 142 to 167 (LNLYLAEVICKVRCATELDRHKILLH) are Cytoplasmic-facing. The chain crosses the membrane as a helical span at residues 168 to 188 (LGFIMASLLFLVVNLTCAMLV). Topologically, residues 189–205 (HGDVPENQLKWTVFVRA) are lumenal. Residues 206-226 (LINDSLFILCAISLVCYICKI) form a helical membrane-spanning segment. The Cytoplasmic segment spans residues 227 to 246 (TKMSSANVYLESKGMSLCQT). The chain crosses the membrane as a helical span at residues 247–267 (VVVGSVVILLYSSRACYNLVV). At 268-300 (VTISQDTLESPFNYGWDNLSDKAHVEDISGEEY) the chain is on the lumenal side. The N-linked (GlcNAc...) asparagine glycan is linked to Asn-285. The chain crosses the membrane as a helical span at residues 301–321 (IVFGMVLFLWEHVPAWSVVLF). At 322 to 429 (FRAQRLNQNL…HHSLYVTPQN (108 aa)) the chain is on the cytoplasmic side.

It belongs to the GPR137 family.

It localises to the lysosome membrane. In terms of biological role, lysosomal integral membrane protein that may regulate MTORC1 complex translocation to lysosomes. The protein is Integral membrane protein GPR137C (GPR137C) of Homo sapiens (Human).